A 520-amino-acid polypeptide reads, in one-letter code: Probable E3 ubiquitin-protein ligase XBOS33 (520 aa).

ANK repeat units lie at residues Gly44–Val73, Cys77–Arg106, Ser111–Pro140, Gly185–Ala214, and Ala228–Leu258. Residues Cys327 to Arg377 form an RING-type zinc finger. A compositionally biased stretch (polar residues) spans Gln467–His479. Residues Gln467–Leu493 form a disordered region. Residues Glu484–Leu493 are compositionally biased toward basic and acidic residues.

The enzyme catalyses S-ubiquitinyl-[E2 ubiquitin-conjugating enzyme]-L-cysteine + [acceptor protein]-L-lysine = [E2 ubiquitin-conjugating enzyme]-L-cysteine + N(6)-ubiquitinyl-[acceptor protein]-L-lysine.. It participates in protein modification; protein ubiquitination. The polypeptide is Probable E3 ubiquitin-protein ligase XBOS33 (XBOS33) (Oryza sativa subsp. japonica (Rice)).